We begin with the raw amino-acid sequence, 260 residues long: Alpha-acetolactate decarboxylase (260 aa).

The protein belongs to the alpha-acetolactate decarboxylase family.

The enzyme catalyses (2S)-2-acetolactate + H(+) = (R)-acetoin + CO2. Its pathway is polyol metabolism; (R,R)-butane-2,3-diol biosynthesis; (R,R)-butane-2,3-diol from pyruvate: step 2/3. Its function is as follows. Converts acetolactate into acetoin. The sequence is that of Alpha-acetolactate decarboxylase (budA) from Methylococcus capsulatus (strain ATCC 33009 / NCIMB 11132 / Bath).